Consider the following 298-residue polypeptide: Acetylglutamate kinase (298 aa).

Residues 64–65, Arg-86, and Asn-195 each bind substrate; that span reads GG.

The protein belongs to the acetylglutamate kinase family. ArgB subfamily.

It localises to the cytoplasm. It catalyses the reaction N-acetyl-L-glutamate + ATP = N-acetyl-L-glutamyl 5-phosphate + ADP. It participates in amino-acid biosynthesis; L-arginine biosynthesis; N(2)-acetyl-L-ornithine from L-glutamate: step 2/4. Functionally, catalyzes the ATP-dependent phosphorylation of N-acetyl-L-glutamate. In Aquifex aeolicus (strain VF5), this protein is Acetylglutamate kinase.